Reading from the N-terminus, the 162-residue chain is Selenoprotein F (162 aa).

The signal sequence occupies residues 1–28 (MAAGQGGWLRPALGLRLLLATAFQAVSA). U93 is a non-standard amino acid (selenocysteine).

It belongs to the selenoprotein M/F family. Forms a tight complex with UGGT1/UGCGL1. Interacts with UGGT2/UGCGL2. Interacts with RDH11.

It is found in the endoplasmic reticulum lumen. Functionally, may be involved in redox reactions associated with the formation of disulfide bonds. May contribute to the quality control of protein folding in the endoplasmic reticulum. May regulate protein folding by enhancing the catalytic activity of UGGT1/UGCGL1 and UGGT2/UGCGL2. The sequence is that of Selenoprotein F from Mus musculus (Mouse).